The sequence spans 709 residues: MTFTKKNVSVSQGPDPRSSIQKERDSSKWNPQQMNYFLEGSVERSELMKALAQQMERDPILFTDGSYYDLTKDQQRELTAVKINRIARYREQESIDTFNKRLSLIGIFDPQVGTRIGVNLGLFLSCIRGNGTTSQLNYWANEKETADVKGIYGCFGMTELAHGSNVAGLETTATFDKESDEFVINTPHIGATKWWIGGAAHSATHCSVYARLIVDGQDYGVKTFVVPLRDSNHDLMPGVTVGDIGPKMGRDGIDNGWIQFSNVRIPRFFMLQKFCKVSAEGEVTLPPLEQLSYSALLGGRVMMVLDSYRMLARMSTIALRYAIGRRQFKGDNVDPNDPNALETQLIDYPLHQKRLFPYFVPPMSSPSVPSRLNTPSRPPWSNWTSPLKRTTPRLIFKSIDDMKSLFVDSGSLKSTATWLGAEAIDQCRQACGGHGHSSYNGFGKAYNDWVVQCTWEGDNNVLGMSVGKPIVKQVISIEDAGKTVRGSTAFLNQLKEYTGSNSSKVVLNTVADLDDIKTVIKAIEVAIIRLSQEAASIVKKESFDYVGAELVQLSKLKAHHYLLTEYIRRIDTFDQKELAPYLITLGKLYAATIVLDRFAGVFLTFNVASTEAITALASVQIPKLCAEVRPNVVAYTDSFQQSDMIVNSAIGRYDGDIYENYFDLVKLQNPPSKTKAPYSDALEAMLNRPTLDERERFQKSDETAAILSK.

Polar residues predominate over residues 1-12 (MTFTKKNVSVSQ). The interval 1 to 29 (MTFTKKNVSVSQGPDPRSSIQKERDSSKW) is disordered.

The protein belongs to the acyl-CoA oxidase family. As to quaternary structure, homooctamer. It depends on FAD as a cofactor.

Its subcellular location is the peroxisome. It catalyses the reaction a 2,3-saturated acyl-CoA + O2 = a (2E)-enoyl-CoA + H2O2. Its pathway is lipid metabolism; peroxisomal fatty acid beta-oxidation. This Candida tropicalis (Yeast) protein is Acyl-coenzyme A oxidase 4 (POX4).